The chain runs to 60 residues: U20-myrmicitoxin-Mri1a (60 aa).

A signal peptide spans 1–24; it reads MKSVILLFAVIAIIVAVIIPAING. A propeptide spanning residues 25 to 34 is cleaved from the precursor; that stretch reads ESSSNPSANA.

It belongs to the formicidae venom precursor-01 superfamily. Expressed by the venom gland.

Its subcellular location is the secreted. Its function is as follows. Induces paralysis 5 minutes after injection into blowflies (L.caesar), and then death within 24 hours. May have antimicrobial properties, like most ant linear peptides. This Manica rubida (European giant red ant) protein is U20-myrmicitoxin-Mri1a.